Consider the following 95-residue polypeptide: Large ribosomal subunit protein uL23 (95 aa).

Belongs to the universal ribosomal protein uL23 family. In terms of assembly, part of the 50S ribosomal subunit. Contacts protein L29, and trigger factor when it is bound to the ribosome.

One of the early assembly proteins it binds 23S rRNA. One of the proteins that surrounds the polypeptide exit tunnel on the outside of the ribosome. Forms the main docking site for trigger factor binding to the ribosome. In Desulfitobacterium hafniense (strain DSM 10664 / DCB-2), this protein is Large ribosomal subunit protein uL23.